Reading from the N-terminus, the 233-residue chain is Glyceraldehyde-3-phosphate dehydrogenase A, chloroplastic (233 aa).

D-glyceraldehyde 3-phosphate contacts are provided by residues 49–51 (SCT), Thr-80, Arg-95, 108–109 (TG), and Arg-131. The active-site Nucleophile is the Cys-50. Asn-213 is a binding site for NADP(+).

It belongs to the glyceraldehyde-3-phosphate dehydrogenase family. Tetramer of either four A chains (GAPDH 2) or two A and two B chains (GAPDH 1).

The protein resides in the plastid. Its subcellular location is the chloroplast. It carries out the reaction D-glyceraldehyde 3-phosphate + phosphate + NADP(+) = (2R)-3-phospho-glyceroyl phosphate + NADPH + H(+). It participates in carbohydrate biosynthesis; Calvin cycle. This is Glyceraldehyde-3-phosphate dehydrogenase A, chloroplastic (GAPA) from Sinapis alba (White mustard).